A 389-amino-acid chain; its full sequence is 5-hydroxytryptamine receptor 1B (389 aa).

Positions 1 to 27 (MEETNTHCAPPPPAGSQTGVSQANLSS) are disordered. Residues 1-45 (MEETNTHCAPPPPAGSQTGVSQANLSSAPPNCSTEGYIYQDSIAL) lie on the Extracellular side of the membrane. Over residues 15-27 (GSQTGVSQANLSS) the composition is skewed to polar residues. N-linked (GlcNAc...) asparagine glycosylation is found at asparagine 24 and asparagine 31. The chain crosses the membrane as a helical span at residues 46-71 (PWKVLLILVLALFTLATTLSNAFVIA). Residues 72–85 (TVYRTRKLHTPANY) lie on the Cytoplasmic side of the membrane. A helical membrane pass occupies residues 86–110 (LIASLAVTDLLVSILVMPISTMYTV). The Extracellular portion of the chain corresponds to 111-118 (TGRWTLGQ). A helical transmembrane segment spans residues 119–144 (VVCDFWLSSDITCCTASILHLCVIAL). Cysteine 121 and cysteine 198 are oxidised to a cystine. The ergotamine site is built by aspartate 128 and threonine 133. The short motif at 145-147 (DRY) is the DRY motif; important for ligand-induced conformation changes and signaling element. Residues 145–164 (DRYWAITDAVEYSAKRTPKR) lie on the Cytoplasmic side of the membrane. A helical transmembrane segment spans residues 165–183 (AAVMIALVWVFSISISLPP). Over 184 to 204 (FFWRQAKAEEEVSDCRVNTDH) the chain is Extracellular. Residue valine 200 participates in ergotamine binding. The helical transmembrane segment at 205-228 (MLYTVYSTVGAFYFPTLLLIALYG) threads the bilayer. At 229 to 314 (RIYVEARSRI…AARERKATKT (86 aa)) the chain is on the cytoplasmic side. A compositionally biased stretch (polar residues) spans 258 to 271 (DSPGSTSSVTSVNS). The disordered stretch occupies residues 258-281 (DSPGSTSSVTSVNSRAPDVPSESG). The helical transmembrane segment at 315–336 (LGIILGAFIVCWLPFFIISLVM) threads the bilayer. Topologically, residues 337-346 (PICKDACWFH) are extracellular. The helical transmembrane segment at 347-369 (LAIFDFFTWLGYLNSLINPIIYT) threads the bilayer. The NPxxY motif; important for ligand-induced conformation changes and signaling signature appears at 364–368 (NPIIY). Residues 370–389 (MSNEDFKQAFHKLIRFKCTG) are Cytoplasmic-facing. Cysteine 387 carries the S-palmitoyl cysteine lipid modification.

The protein belongs to the G-protein coupled receptor 1 family. In terms of assembly, homodimer. Heterodimer with HTR1D. In terms of processing, phosphorylated. Desensitization of the receptor may be mediated by its phosphorylation. Post-translationally, palmitoylated.

It is found in the cell membrane. In terms of biological role, G-protein coupled receptor for 5-hydroxytryptamine (serotonin). Also functions as a receptor for ergot alkaloid derivatives, various anxiolytic and antidepressant drugs and other psychoactive substances, such as lysergic acid diethylamide (LSD). Ligand binding causes a conformation change that triggers signaling via guanine nucleotide-binding proteins (G proteins) and modulates the activity of downstream effectors, such as adenylate cyclase. HTR1B is coupled to G(i)/G(o) G alpha proteins and mediates inhibitory neurotransmission by inhibiting adenylate cyclase activity. Arrestin family members inhibit signaling via G proteins and mediate activation of alternative signaling pathways. Regulates the release of 5-hydroxytryptamine, dopamine and acetylcholine in the brain, and thereby affects neural activity, nociceptive processing, pain perception, mood and behavior. Besides, plays a role in vasoconstriction of cerebral arteries. The protein is 5-hydroxytryptamine receptor 1B (HTR1B) of Felis catus (Cat).